A 288-amino-acid polypeptide reads, in one-letter code: Probable anion import ATP-binding protein HVO_1886 (288 aa).

Over residues 1–18 (MTTERPDAGDSGSEKPDE) the composition is skewed to basic and acidic residues. The segment at 1–33 (MTTERPDAGDSGSEKPDETAAPDPAANGARRSK) is disordered. In terms of domain architecture, ABC transporter spans 36–282 (LAARSLGHGF…PDDDRVRQFV (247 aa)). 68 to 75 (GPSGTGKT) contacts ATP.

The protein belongs to the ABC transporter superfamily. As to quaternary structure, the complex is composed of two ATP-binding proteins (HVO_1886), two transmembrane proteins (HVO_1887) and a solute-binding protein (HVO_1888).

The protein localises to the cell membrane. In terms of biological role, part of an ABC transporter complex involved in anions import. Responsible for energy coupling to the transport system. The polypeptide is Probable anion import ATP-binding protein HVO_1886 (Haloferax volcanii (strain ATCC 29605 / DSM 3757 / JCM 8879 / NBRC 14742 / NCIMB 2012 / VKM B-1768 / DS2) (Halobacterium volcanii)).